We begin with the raw amino-acid sequence, 503 residues long: Drimenol monooxygenase (503 aa).

A helical transmembrane segment spans residues M7–S23. Residue S471 coordinates heme.

This sequence belongs to the cytochrome P450 family. Heme serves as cofactor.

It localises to the membrane. It carries out the reaction (5S,9S,10S)-drim-7-en-11-ol + reduced [NADPH--hemoprotein reductase] + O2 = (5S,10S)-(9R)-7-drimene-11,12-diol + oxidized [NADPH--hemoprotein reductase] + H2O + H(+). Catalyzes the conversion of drimenol to drimendiol, a precursor of the sesquiterpenoid polygodial. Polygodial has been shown to be an antifeedant for a number of herbivorous insects. The polypeptide is Drimenol monooxygenase (Persicaria hydropiper (Marshpepper knotweed)).